The following is a 234-amino-acid chain: Sugar fermentation stimulation protein homolog (234 aa).

This sequence belongs to the SfsA family.

The sequence is that of Sugar fermentation stimulation protein homolog from Shewanella baltica (strain OS223).